A 443-amino-acid chain; its full sequence is MSWIDELSKIVEVFPPSDAYRFDETPPLVAPRAAENFVVVKPSNSEEVSAILKFANEKSIPVFMRGGGTGLSGGAVPTEEGIVLSTEKMTELEVDADNRVAICGAGVTLKQLDDAAFRHGLSFPPHPGAETATVGGMIATNAGGVRALKYGTMRNYVLSLEAVLADGRIINVGGKTIKNSSGYSLLHLLVGSEGTLAVITKATIRLFPQMRDMTVLAIPFPTMEDAMNCVVEVARKMLPMALEFMEKRAVEIGEKVSGERWVSREGEAHLLMVFESFDEAEEAAKIAQSLGAIDVYAATTKKDQDRLLKVRGMIYEGLRKEVIEVLDACVPPAKIAEYWRRSNELAEEYGIELITYGHAGDGNVHQHPLVYEGWEKSYFEFRKSLLSLAVSLGGVISGEHGIGAVKLSELEELFPEQFELMRQIKLLFDPKNILNPGKVVRKL.

The Extracellular segment spans residues 1–182 (MSWIDELSKI…GGKTIKNSSG (182 aa)). The 178-residue stretch at 32 to 209 (RAAENFVVVK…TKATIRLFPQ (178 aa)) folds into the FAD-binding PCMH-type domain. Residues 183–203 (YSLLHLLVGSEGTLAVITKAT) form a helical membrane-spanning segment. Residues 204–383 (IRLFPQMRDM…WEKSYFEFRK (180 aa)) lie on the Cytoplasmic side of the membrane. A helical transmembrane segment spans residues 384 to 404 (SLLSLAVSLGGVISGEHGIGA). Topologically, residues 405-443 (VKLSELEELFPEQFELMRQIKLLFDPKNILNPGKVVRKL) are extracellular.

The protein belongs to the FAD-binding oxidoreductase/transferase type 4 family. The cofactor is FAD. Zn(2+) serves as cofactor.

The protein localises to the cell membrane. The catalysed reaction is (R)-lactate + A = pyruvate + AH2. In terms of biological role, catalyzes the dehydrogenation of (R)-lactate (D-lactate) to pyruvate. Is likely involved in the utilization of D-lactate as a sole source for both carbon and electrons for dissimilatory sulfate reduction. Cannot use L-lactate as substrate, and NAD(+), horse cytochrome c, methylene blue or dimethylnaphthoquinone as acceptors. Active in vitro with artificial electron acceptors such as 2,6-dichlorophenolindophenol (DCPIP); the physiological acceptor is not known, but potential acceptors include cytochromes or quinones. The polypeptide is D-lactate dehydrogenase (Archaeoglobus fulgidus (strain ATCC 49558 / DSM 4304 / JCM 9628 / NBRC 100126 / VC-16)).